The chain runs to 226 residues: Urease accessory protein UreF (226 aa).

This sequence belongs to the UreF family. In terms of assembly, ureD, UreF and UreG form a complex that acts as a GTP-hydrolysis-dependent molecular chaperone, activating the urease apoprotein by helping to assemble the nickel containing metallocenter of UreC. The UreE protein probably delivers the nickel.

Its subcellular location is the cytoplasm. Its function is as follows. Required for maturation of urease via the functional incorporation of the urease nickel metallocenter. The polypeptide is Urease accessory protein UreF (Paraburkholderia xenovorans (strain LB400)).